The following is a 708-amino-acid chain: Protein SUPPRESSOR OF MAX2 1A (708 aa).

Residues 248-283 form a disordered region; that stretch reads QMASKPQEKAASPPGSPVRTDLVLGPKQTETTPEKT. Positions 537–541 match the EAR motif; that stretch reads FDLNE.

The protein belongs to the ClpA/ClpB family.

Functionally, probable component of a transcriptional corepressor complex that acts downstream of MAX2 to negatively regulate karrikins/strigolactone responses. Involved in the (-)-germacrene D signaling pathway influencing plant fitness and occurring in the stigma in a KAI2IA-dependent manner. This chain is Protein SUPPRESSOR OF MAX2 1A, found in Petunia hybrida (Petunia).